The following is a 287-amino-acid chain: Orotidine 5'-phosphate decarboxylase (287 aa).

The Proton donor role is filled by Lys95.

The protein belongs to the OMP decarboxylase family. Type 2 subfamily.

The catalysed reaction is orotidine 5'-phosphate + H(+) = UMP + CO2. The protein operates within pyrimidine metabolism; UMP biosynthesis via de novo pathway; UMP from orotate: step 2/2. The chain is Orotidine 5'-phosphate decarboxylase from Albidiferax ferrireducens (strain ATCC BAA-621 / DSM 15236 / T118) (Rhodoferax ferrireducens).